A 1642-amino-acid polypeptide reads, in one-letter code: Cobra venom factor (1642 aa).

A signal peptide spans Met1–Gly22. 3 N-linked (GlcNAc...) asparagine glycosylation sites follow: Asn153, Asn158, and Asn209. Pro516, Asp539, Val540, and Asp542 together coordinate Mg(2+). 12 disulfide bridges follow: Cys544–Cys801, Cys609–Cys644, Cys677–Cys704, Cys678–Cys711, Cys691–Cys712, Cys857–Cys1492, Cys1340–Cys1468, Cys1368–Cys1437, Cys1485–Cys1490, Cys1497–Cys1569, Cys1516–Cys1640, and Cys1616–Cys1625. A propeptide spanning residues Arg650–Arg732 is cleaved from the precursor. The interval Ser654 to Arg732 is C3a-like domain. The Anaphylatoxin-like domain occupies Cys677–Cys712. Residues Glu736–Ser747 are factor B binding site. Positions His985 to Tyr1263 are excised as a propeptide. A C3d-like domain region spans residues His985 to Tyr1263. The isoglutamyl cysteine thioester (Cys-Gln) cross-link spans Cys993–Gln996. Residues Val1190–Thr1253 are factor H binding site. Asn1346 is a glycosylation site (N-linked (GlcNAc...) asparagine). Residues Cys1497–Cys1640 enclose the NTR domain.

It belongs to the venom complement C3 homolog family. As to quaternary structure, heterotrimer of alpha, beta and gamma chains; disulfide-linked. Is active with factor B in the presence of factor D. Post-translationally, first processed by the removal of 4 Arg residues by furin-type protease, forming two chains, alpha and gamma/beta precursor, linked by a disulfide bond. Probably, the cobrin cleaves the C3a-like domain and then the C3d-like domain, generating the mature cobra venom factor (CVF). This mature CVF is composed of three chains: alpha, gamma and beta. In terms of processing, contains 3 N-linked oligosaccharide chains, two in the alpha-chain and one in the beta-chain. Glycosylation is not required for the biological activity. However, it contributes to the immunogenicity of CVF. The carbohydrate content is 7.4. The major oligosaccharide is a symmetric fucosylated biantennary complex-type chain with an unusual alpha-galactosylated Le(x) structure at its non-reducing end. As to expression, expressed by the venom gland.

The protein localises to the secreted. Its function is as follows. Complement-activating protein in cobra venom. It is a structural and functional analog of complement component C3b, the activated form of C3. It binds factor B (CFB), which is subsequently cleaved by factor D (CFD) to form the bimolecular complex CVF/Bb. CVF/Bb is a C3/C5 convertase that cleaves both complement components C3 and C5. Structurally, it resembles the C3b degradation product C3c, which is not able to form a C3/C5 convertase. Unlike C3b/Bb, CVF/Bb is a stable complex and completely resistant to the actions of complement regulatory factors H (CFH) and I (CFI). Therefore, CVF continuously activates complement resulting in the depletion of complement activity. The protein is Cobra venom factor of Naja kaouthia (Monocled cobra).